A 1118-amino-acid polypeptide reads, in one-letter code: Cytospin-A (1118 aa).

4 disordered regions span residues 1 to 63, 75 to 176, 294 to 324, and 359 to 391; these read MKKA…AGMA, KKST…NQIS, SLSP…GSVE, and SSDD…NASE. A compositionally biased stretch (low complexity) spans 80-90; sequence SSAAPSAPAPA. Residues 93 to 117 are compositionally biased toward polar residues; the sequence is ISENKSKISTGTSSSAKRSTSAGNK. A compositionally biased stretch (basic and acidic residues) spans 120-131; sequence SSTRERLRERTR. A compositionally biased stretch (polar residues) spans 133–145; it reads NQSKKLPSVSQGA. Over residues 158 to 171 the composition is skewed to basic and acidic residues; the sequence is TAAEGDIRMSKSKS. Positions 168-281 form a coiled coil; the sequence is KSKSDNQISD…LNALGFSLEQ (114 aa). Residues 294 to 304 are compositionally biased toward polar residues; the sequence is SLSPEITPGNQ. Positions 359 to 373 are enriched in low complexity; it reads SSDDALDAPSSSESE. Phosphoserine occurs at positions 385, 386, and 390. Coiled-coil stretches lie at residues 395–450 and 488–808; these read ACLT…MESL and RYME…RGRV. S869, S882, and S888 each carry phosphoserine. The segment at 921–999 is disordered; sequence TSSTSRPASL…STRSRIREER (79 aa). Residues 947 to 957 are compositionally biased toward basic and acidic residues; the sequence is RSSEEMKRDIS. A compositionally biased stretch (low complexity) spans 972-992; that stretch reads TTSPQLSLSSSPTASVTPSTR. In terms of domain architecture, Calponin-homology (CH) spans 1012–1117; it reads GSKRNALLKW…YVTAIYKYFE (106 aa).

Belongs to the cytospin-A family. May interact with both microtubules and actin cytoskeleton.

Its subcellular location is the cytoplasm. It is found in the cytoskeleton. The protein resides in the spindle. It localises to the cell junction. The protein localises to the gap junction. Functionally, involved in cytokinesis and spindle organization. May play a role in actin cytoskeleton organization and microtubule stabilization and hence required for proper cell adhesion and migration. The protein is Cytospin-A (Specc1l) of Mus musculus (Mouse).